Consider the following 209-residue polypeptide: Uracil phosphoribosyltransferase (209 aa).

Residues arginine 79, arginine 104, and 131-139 (DPMLATGGS) contribute to the 5-phospho-alpha-D-ribose 1-diphosphate site. Residues isoleucine 194 and 199–201 (GDA) contribute to the uracil site. Residue aspartate 200 coordinates 5-phospho-alpha-D-ribose 1-diphosphate.

It belongs to the UPRTase family. Requires Mg(2+) as cofactor.

The enzyme catalyses UMP + diphosphate = 5-phospho-alpha-D-ribose 1-diphosphate + uracil. It functions in the pathway pyrimidine metabolism; UMP biosynthesis via salvage pathway; UMP from uracil: step 1/1. With respect to regulation, allosterically activated by GTP. Catalyzes the conversion of uracil and 5-phospho-alpha-D-ribose 1-diphosphate (PRPP) to UMP and diphosphate. This chain is Uracil phosphoribosyltransferase, found in Lactiplantibacillus plantarum (strain ATCC BAA-793 / NCIMB 8826 / WCFS1) (Lactobacillus plantarum).